We begin with the raw amino-acid sequence, 388 residues long: F-box protein At5g42460 (388 aa).

An F-box domain is found at 1-47 (MTIMSDLPRDLLAEILSRVPLTSLRAVRLTCKKWNDLSKDRSFLKKQ).

This is F-box protein At5g42460 from Arabidopsis thaliana (Mouse-ear cress).